The sequence spans 1284 residues: Integrator complex subunit 6 (1284 aa).

The VWFA domain maps to 3 to 134; that stretch reads IILFLVDTSS…PSVIIVITDG (132 aa). Disordered stretches follow at residues 653 to 824, 864 to 895, 1053 to 1086, and 1125 to 1180; these read DVAP…GMSN, ETGETEAVPGGASLPGASSANEPSSIGASPAV, TSSGSSVGAGASNSNLNGNGSTESGGGVSSDDHA, and NNSS…PGQS. Residues 690–721 show a composition bias toward gly residues; it reads SPGGGSGPGMPGMPGMGGGMSGLMLGAGGSGG. Composition is skewed to low complexity over residues 752-781 and 803-824; these read DSRSSSSGSESSTTGSAPGSPIPGATSSIS and NSNSSFVSSTSEASASDSGMSN. Over residues 879 to 890 the composition is skewed to polar residues; sequence GASSANEPSSIG. 2 stretches are compositionally biased toward low complexity: residues 1053-1074 and 1125-1141; these read TSSGSSVGAGASNSNLNGNGST and NNSSAAGAASGSTLSNN. Over residues 1159–1171 the composition is skewed to polar residues; it reads INSSCGSSPTHNN.

The protein belongs to the Integrator subunit 6 family. Belongs to the multiprotein complex Integrator, at least composed of IntS1, IntS2, IntS3, IntS4, omd/IntS5, IntS6, defl/IntS7, IntS8, IntS9, IntS10, IntS11, IntS12, asun/IntS13, IntS14 and IntS15. The core complex associates with protein phosphatase 2A subunits mts/PP2A and Pp2A-29B, to form the Integrator-PP2A (INTAC) complex.

It is found in the nucleus. Component of the integrator complex, a multiprotein complex that terminates RNA polymerase II (Pol II) transcription in the promoter-proximal region of genes. The integrator complex provides a quality checkpoint during transcription elongation by driving premature transcription termination of transcripts that are unfavorably configured for transcriptional elongation: the complex terminates transcription by (1) catalyzing dephosphorylation of the C-terminal domain (CTD) of Pol II subunit Polr2A/Rbp1 and Spt5, and (2) degrading the exiting nascent RNA transcript via endonuclease activity. The integrator complex is also involved in the 3'-end processing of the U7 snRNA, and also the spliceosomal snRNAs U1, U2, U4 and U5. Within the integrator complex, IntS6 acts as a substrate adapter for protein phosphatase 2A (PP2A). This Drosophila melanogaster (Fruit fly) protein is Integrator complex subunit 6.